The sequence spans 36 residues: Glucagon-1 (36 aa).

Belongs to the glucagon family.

It is found in the secreted. Its function is as follows. Promotes hydrolysis of glycogen and lipids, and raises the blood sugar level. This is Glucagon-1 (gcg1) from Oreochromis niloticus (Nile tilapia).